The chain runs to 140 residues: Small ribosomal subunit protein uS12 (140 aa).

Positions 1–28 (MPTINQLVRKSRKALEKKSTAPALQKGY) are disordered. D102 bears the 3-methylthioaspartic acid mark. The interval 119–140 (GVDKRRQSRSKYGAKRPKEAKK) is disordered. Residues 124-140 (RQSRSKYGAKRPKEAKK) are compositionally biased toward basic residues.

It belongs to the universal ribosomal protein uS12 family. In terms of assembly, part of the 30S ribosomal subunit. Contacts proteins S8 and S17. May interact with IF1 in the 30S initiation complex.

Its function is as follows. With S4 and S5 plays an important role in translational accuracy. Interacts with and stabilizes bases of the 16S rRNA that are involved in tRNA selection in the A site and with the mRNA backbone. Located at the interface of the 30S and 50S subunits, it traverses the body of the 30S subunit contacting proteins on the other side and probably holding the rRNA structure together. The combined cluster of proteins S8, S12 and S17 appears to hold together the shoulder and platform of the 30S subunit. The protein is Small ribosomal subunit protein uS12 of Clostridioides difficile (strain 630) (Peptoclostridium difficile).